The primary structure comprises 51 residues: AANQHLCGSHLVEALYLVCGERGFFYSPKAGIVEQCCHNTCSLYQLENYCN.

3 disulfides stabilise this stretch: Cys7–Cys37, Cys19–Cys50, and Cys36–Cys41.

Belongs to the insulin family. Heterodimer of a B chain and an A chain linked by two disulfide bonds.

Its subcellular location is the secreted. Its function is as follows. Insulin decreases blood glucose concentration. It increases cell permeability to monosaccharides, amino acids and fatty acids. It accelerates glycolysis, the pentose phosphate cycle, and glycogen synthesis in liver. The polypeptide is Insulin (INS) (Meleagris gallopavo (Wild turkey)).